Reading from the N-terminus, the 1031-residue chain is Toll-like receptor 9 (1031 aa).

Residues 1–25 form the signal peptide; sequence MGPCHGALQPLSLLVQAAMLAVALA. Residues 26–817 are Extracellular-facing; sequence QGTLPPFLPC…LCLDESLSWD (792 aa). Cysteines 35 and 45 form a disulfide. Residue 47 to 51 coordinates DNA; it reads WLFLK. LRR repeat units lie at residues 62–85, 87–110, 122–147, 150–166, 167–190, 198–221, 223–242, 243–268, 283–306, 308–332, 333–356, 363–386, 390–413, 414–438, 470–494, 496–519, 520–543, 545–567, 574–598, 600–622, 627–650, 652–675, 676–699, 701–723, 724–747, and 749–772; these read RDNV…DFAQ, SNLQ…HFPC, VPTL…SLVS, LSRT…LTGL, HALR…ALEV, LGNL…LPPS, EYLL…DLAN, LTAL…CVEC, LSRL…WFRG, GNLT…AFQG, LAQL…HLTL, LLSL…TLQP, LPML…IFKD, FPGL…ATTG, CKNL…MFAQ, SRLQ…QFVP, LTSL…SFTE, PRLE…VGHN, LPTL…LCST, LWAL…LYLR, LRSL…TLGN, PKSL…SLTL, LPNL…SLPS, TQLQ…FFAL, ATRL…WFGF, and AGSL…AFVD. A glycan (N-linked (GlcNAc...) asparagine) is linked at Asn-64. DNA is bound by residues 72–77 and 95–109; these read SNRIHH and KWNC…MHFP. Cysteines 98 and 110 form a disulfide. An N-linked (GlcNAc...) asparagine glycan is attached at Asn-129. Residues Tyr-132, Arg-152, and 179–181 each bind DNA; that span reads YYK. Cysteines 178 and 184 form a disulfide. Asn-200 carries N-linked (GlcNAc...) asparagine glycosylation. Tyr-208 serves as a coordination point for DNA. Residues Asn-210 and Asn-242 are each glycosylated (N-linked (GlcNAc...) asparagine). Disulfide bonds link Cys-255–Cys-268 and Cys-258–Cys-265. Cys-258 is lipidated: S-palmitoyl cysteine. Residue Arg-262 participates in DNA binding. The S-palmitoyl cysteine moiety is linked to residue Cys-265. Residues Asn-309 and Asn-340 are each glycosylated (N-linked (GlcNAc...) asparagine). A disulfide bridge connects residues Cys-470 and Cys-500. Residues Asn-472 and Asn-513 are each glycosylated (N-linked (GlcNAc...) asparagine). N-linked (GlcNAc...) asparagine glycosylation is present at Asn-567. N-linked (GlcNAc...) asparagine glycans are attached at residues Asn-669 and Asn-694. The N-linked (GlcNAc...) asparagine glycan is linked to Asn-731. Intrachain disulfides connect Cys-764/Cys-790 and Cys-766/Cys-809. Residues 818 to 838 form a helical membrane-spanning segment; that stretch reads CFGLSLLVVALGLAMPMLHHL. Residues 839–1031 lie on the Cytoplasmic side of the membrane; the sequence is CGWDLWYCFH…NFCRGPTMAE (193 aa). In terms of domain architecture, TIR spans 866-1011; it reads LSYDAFVVFD…SFWAQLGMAL (146 aa).

It belongs to the Toll-like receptor family. In terms of assembly, monomer and homodimer. Exists as a monomer in the absence of unmethylated cytidine-phosphate-guanosine (CpG) ligand. Proteolytic processing of an insertion loop (Z-loop) is required for homodimerization upon binding to the unmethylated CpG ligand leading to its activation. Interacts with MYD88 via their respective TIR domains. Interacts with BTK. Interacts (via transmembrane domain) with UNC93B1. Interacts with CD300LH; the interaction may promote full activation of TLR9-triggered innate responses. Interacts with CNPY3 and HSP90B1; this interaction is required for proper folding in the endoplasmic reticulum. Interacts with SMPDL3B. Interacts with CD82; this interaction is essential for TLR9-dependent myddosome formation in response to CpG stimulation. Activated by proteolytic cleavage of the flexible loop between repeats LRR14 and LRR15 within the ectodomain. Cleavage requires UNC93B1. Proteolytically processed by first removing the majority of the ectodomain by either asparagine endopeptidase (AEP) or a cathepsin followed by a trimming event that is solely cathepsin mediated and required for optimal receptor signaling. Post-translationally, palmitoylated by ZDHHC3 in the Golgi regulates TLR9 trafficking from the Golgi to endosomes. Depalmitoylation by PPT1 controls the release of TLR9 from UNC93B1 in endosomes. In terms of tissue distribution, expressed in airway epithelium, vascular endothelium and inflammatory cells in blood vessels of the lungs (at protein level). Highly expressed in pulmonary intravascular macrophages (PIMs) and to a lesser extent in alveolar macrophages, neutrophiles, type-II alveolar epithelial cells and bronchial epithelial cells of the lungs (at protein level). High constitutive intracellular expression in leukocytes including polymorphonuclear leukocytes (PMNs), CD4 and CD8 T cells (at protein level). Expressed throughout the respiratory tract including larynx, upper, middle and lower trachea, and bronchus in isolated equine respiratory epithelial cells (ERECs) and in fully differentiated ERECs cultured at the air-fluid interface (AFI) (at protein level). Constitutively expressed in peripheral blood mononuclear cells (PBMCs), lymph nodes and spleen. The level of expression in PBMCs is about 2- to 3-fold higher than that in lymph nodes and spleen. Very low expression in liver, heart, lung, kidney, small intestine, colon and stomach. Low expression in the airway tissue epithelium of the larynx, upper trachea, middle tranchea, lower trachea, bronchus and spleen, and more abundant expression in mesenteric lymph node. Not expressed in fully differentiated bronchus epithelial cells cultured at the AFI for four weeks. Expressed in gingival tissue.

The protein resides in the endoplasmic reticulum membrane. It is found in the endosome. Its subcellular location is the lysosome. The protein localises to the cytoplasmic vesicle. It localises to the phagosome. The protein resides in the cell membrane. It is found in the cytoplasm. Its subcellular location is the nucleus. In terms of biological role, key component of innate and adaptive immunity. TLRs (Toll-like receptors) control host immune response against pathogens through recognition of molecular patterns specific to microorganisms. TLR9 is a nucleotide-sensing TLR which is activated by unmethylated cytidine-phosphate-guanosine (CpG) dinucleotides. Acts via MYD88 and TRAF6, leading to NF-kappa-B activation, cytokine secretion and the inflammatory response. Upon CpG stimulation, induces B-cell proliferation, activation, survival and antibody production. The chain is Toll-like receptor 9 from Equus caballus (Horse).